The chain runs to 353 residues: S-adenosylmethionine:tRNA ribosyltransferase-isomerase (353 aa).

Belongs to the QueA family. As to quaternary structure, monomer.

It localises to the cytoplasm. It catalyses the reaction 7-aminomethyl-7-carbaguanosine(34) in tRNA + S-adenosyl-L-methionine = epoxyqueuosine(34) in tRNA + adenine + L-methionine + 2 H(+). Its pathway is tRNA modification; tRNA-queuosine biosynthesis. Transfers and isomerizes the ribose moiety from AdoMet to the 7-aminomethyl group of 7-deazaguanine (preQ1-tRNA) to give epoxyqueuosine (oQ-tRNA). This Baumannia cicadellinicola subsp. Homalodisca coagulata protein is S-adenosylmethionine:tRNA ribosyltransferase-isomerase.